Here is a 305-residue protein sequence, read N- to C-terminus: uncharacterized protein (305 aa).

This is an uncharacterized protein from Sinorhizobium fredii (strain NBRC 101917 / NGR234).